The primary structure comprises 356 residues: UDP-N-acetylglucosamine--N-acetylmuramyl-(pentapeptide) pyrophosphoryl-undecaprenol N-acetylglucosamine transferase (356 aa).

UDP-N-acetyl-alpha-D-glucosamine-binding positions include 11–13 (TGG), Asn-123, Arg-159, Ser-187, Ile-241, 260–265 (ALTVAE), and Gln-286.

This sequence belongs to the glycosyltransferase 28 family. MurG subfamily.

It is found in the cell inner membrane. The enzyme catalyses di-trans,octa-cis-undecaprenyl diphospho-N-acetyl-alpha-D-muramoyl-L-alanyl-D-glutamyl-meso-2,6-diaminopimeloyl-D-alanyl-D-alanine + UDP-N-acetyl-alpha-D-glucosamine = di-trans,octa-cis-undecaprenyl diphospho-[N-acetyl-alpha-D-glucosaminyl-(1-&gt;4)]-N-acetyl-alpha-D-muramoyl-L-alanyl-D-glutamyl-meso-2,6-diaminopimeloyl-D-alanyl-D-alanine + UDP + H(+). The protein operates within cell wall biogenesis; peptidoglycan biosynthesis. Functionally, cell wall formation. Catalyzes the transfer of a GlcNAc subunit on undecaprenyl-pyrophosphoryl-MurNAc-pentapeptide (lipid intermediate I) to form undecaprenyl-pyrophosphoryl-MurNAc-(pentapeptide)GlcNAc (lipid intermediate II). The chain is UDP-N-acetylglucosamine--N-acetylmuramyl-(pentapeptide) pyrophosphoryl-undecaprenol N-acetylglucosamine transferase from Azoarcus sp. (strain BH72).